We begin with the raw amino-acid sequence, 223 residues long: Cytotoxic T-lymphocyte protein 4 (223 aa).

Positions 1-35 (MAGFGFRRHGVQPDLASRTWPCTALFSLLFIPVFS) are cleaved as a signal peptide. Topologically, residues 36 to 161 (KGMHAAQPAV…IDPEPCPDSD (126 aa)) are extracellular. The region spanning 39 to 140 (HAAQPAVVLA…VELMYPPPYY (102 aa)) is the Ig-like V-type domain. The homodimerization stretch occupies residues 46–50 (VLASS). 2 disulfide bridges follow: C58–C129 and C85–C103. Residue N113 is glycosylated (N-linked (GlcNAc...) asparagine). An important for interaction with CD80 and CD86 region spans residues 134–139 (MYPPPY). N-linked (GlcNAc...) asparagine glycosylation occurs at N145. Residues 150 to 155 (YVIDPE) are homodimerization. The chain crosses the membrane as a helical span at residues 162–182 (FLLWILAAVSSGLFFYSFLIT). Over 183 to 223 (AVSLSKMLKKRSPLTTGVYVKMPPTGPECEKQFQPYFIPIN) the chain is Cytoplasmic. At Y201 the chain carries Phosphotyrosine; by TXK and JAK2.

In terms of assembly, homodimer; disulfide-linked. Binds to CD80/B7-1 and CD86/B7.2. Interacts with ICOSLG. In terms of processing, N-glycosylation is important for dimerization. Phosphorylation at Tyr-201 prevents binding to the AP-2 adapter complex, blocks endocytosis, and leads to retention of CTLA4 on the cell surface.

It is found in the cell membrane. In terms of biological role, inhibitory receptor acting as a major negative regulator of T-cell responses. The affinity of CTLA4 for its natural B7 family ligands, CD80 and CD86, is considerably stronger than the affinity of their cognate stimulatory coreceptor CD28. This is Cytotoxic T-lymphocyte protein 4 (CTLA4) from Canis lupus familiaris (Dog).